We begin with the raw amino-acid sequence, 711 residues long: Polyribonucleotide nucleotidyltransferase (711 aa).

Residues aspartate 489 and aspartate 495 each coordinate Mg(2+). One can recognise a KH domain in the interval 556–615; it reads PRIHTIKISPDKIKDVIGKGGSVIRALTEETGTTIEIEDDGTVKIAATDGEKAKHAIRRI. An S1 motif domain is found at 625–693; the sequence is GRIYNGKVTR…RQGRVRLSIK (69 aa).

Belongs to the polyribonucleotide nucleotidyltransferase family. Component of the RNA degradosome, which is a multiprotein complex involved in RNA processing and mRNA degradation. Mg(2+) serves as cofactor.

Its subcellular location is the cytoplasm. It catalyses the reaction RNA(n+1) + phosphate = RNA(n) + a ribonucleoside 5'-diphosphate. Functionally, involved in mRNA degradation. Catalyzes the phosphorolysis of single-stranded polyribonucleotides processively in the 3'- to 5'-direction. This chain is Polyribonucleotide nucleotidyltransferase, found in Cronobacter sakazakii (strain ATCC BAA-894) (Enterobacter sakazakii).